The sequence spans 260 residues: Thiazole synthase (260 aa).

Lys-100 (schiff-base intermediate with DXP) is an active-site residue. 1-deoxy-D-xylulose 5-phosphate-binding positions include Gly-161, 187-188 (AG), and 209-210 (NT).

The protein belongs to the ThiG family. Homotetramer. Forms heterodimers with either ThiH or ThiS.

The protein localises to the cytoplasm. The catalysed reaction is [ThiS sulfur-carrier protein]-C-terminal-Gly-aminoethanethioate + 2-iminoacetate + 1-deoxy-D-xylulose 5-phosphate = [ThiS sulfur-carrier protein]-C-terminal Gly-Gly + 2-[(2R,5Z)-2-carboxy-4-methylthiazol-5(2H)-ylidene]ethyl phosphate + 2 H2O + H(+). The protein operates within cofactor biosynthesis; thiamine diphosphate biosynthesis. Functionally, catalyzes the rearrangement of 1-deoxy-D-xylulose 5-phosphate (DXP) to produce the thiazole phosphate moiety of thiamine. Sulfur is provided by the thiocarboxylate moiety of the carrier protein ThiS. In vitro, sulfur can be provided by H(2)S. This is Thiazole synthase from Sorangium cellulosum (strain So ce56) (Polyangium cellulosum (strain So ce56)).